Here is a 332-residue protein sequence, read N- to C-terminus: DNA-directed RNA polymerase subunit alpha (332 aa).

An alpha N-terminal domain (alpha-NTD) region spans residues 1–227 (MKKFAETPFL…VMYSQMSVFN (227 aa)). Residues 248–332 (KELVIRIDDL…LRRKLEQLKA (85 aa)) are alpha C-terminal domain (alpha-CTD).

It belongs to the RNA polymerase alpha chain family. As to quaternary structure, homodimer. The RNAP catalytic core consists of 2 alpha, 1 beta, 1 beta' and 1 omega subunit. When a sigma factor is associated with the core the holoenzyme is formed, which can initiate transcription.

It catalyses the reaction RNA(n) + a ribonucleoside 5'-triphosphate = RNA(n+1) + diphosphate. DNA-dependent RNA polymerase catalyzes the transcription of DNA into RNA using the four ribonucleoside triphosphates as substrates. The polypeptide is DNA-directed RNA polymerase subunit alpha (Aliarcobacter butzleri (strain RM4018) (Arcobacter butzleri)).